Here is a 413-residue protein sequence, read N- to C-terminus: L-cysteine:1D-myo-inositol 2-amino-2-deoxy-alpha-D-glucopyranoside ligase (413 aa).

Cys43 lines the Zn(2+) pocket. L-cysteinyl-5'-AMP is bound by residues 43–46, Thr58, and 81–83; these read CGIT and NIT. The 'HIGH' region signature appears at 45-55; sequence ITPYDATHLGH. The 'ERGGDP' region motif lies at 187 to 192; it reads ERGGDP. Trp227 serves as a coordination point for L-cysteinyl-5'-AMP. Position 231 (Cys231) interacts with Zn(2+). 249 to 251 provides a ligand contact to L-cysteinyl-5'-AMP; the sequence is GND. Zn(2+) is bound at residue His256. Val283 contacts L-cysteinyl-5'-AMP. The 'KMSKS' region motif lies at 289-293; it reads KMSKS.

The protein belongs to the class-I aminoacyl-tRNA synthetase family. MshC subfamily. In terms of assembly, monomer. Requires Zn(2+) as cofactor.

It catalyses the reaction 1D-myo-inositol 2-amino-2-deoxy-alpha-D-glucopyranoside + L-cysteine + ATP = 1D-myo-inositol 2-(L-cysteinylamino)-2-deoxy-alpha-D-glucopyranoside + AMP + diphosphate + H(+). Catalyzes the ATP-dependent condensation of GlcN-Ins and L-cysteine to form L-Cys-GlcN-Ins. This is L-cysteine:1D-myo-inositol 2-amino-2-deoxy-alpha-D-glucopyranoside ligase from Gordonia bronchialis (strain ATCC 25592 / DSM 43247 / BCRC 13721 / JCM 3198 / KCTC 3076 / NBRC 16047 / NCTC 10667) (Rhodococcus bronchialis).